The chain runs to 577 residues: ABC transporter G family member 4 (577 aa).

Residues 6-248 form the ABC transporter domain; it reads LSTSSISYAK…LLSKGFTVPS (243 aa). Residue 48–55 coordinates ATP; the sequence is GPSGAGKS. Residues 299–509 enclose the ABC transmembrane type-2 domain; that stretch reads TEISLLSSRF…ALDALLINEY (211 aa). Helical transmembrane passes span 318-338, 353-373, 400-420, 429-449, 458-478, 487-507, and 548-568; these read LLLT…TIYL, LFAF…PIFI, VFLP…YFLV, LAYF…FVLF, IAGT…SGYF, YWLF…LLIN, and FNVY…FLVL.

Belongs to the ABC transporter superfamily. ABCG family. Eye pigment precursor importer (TC 3.A.1.204) subfamily.

Its subcellular location is the membrane. This Arabidopsis thaliana (Mouse-ear cress) protein is ABC transporter G family member 4 (ABCG4).